The chain runs to 122 residues: Large ribosomal subunit protein uL14 (122 aa).

This sequence belongs to the universal ribosomal protein uL14 family. As to quaternary structure, part of the 50S ribosomal subunit. Forms a cluster with proteins L3 and L19. In the 70S ribosome, L14 and L19 interact and together make contacts with the 16S rRNA in bridges B5 and B8.

In terms of biological role, binds to 23S rRNA. Forms part of two intersubunit bridges in the 70S ribosome. This chain is Large ribosomal subunit protein uL14, found in Chlorobium phaeobacteroides (strain DSM 266 / SMG 266 / 2430).